Reading from the N-terminus, the 301-residue chain is Probable deoxyhypusine synthase 1 (301 aa).

The Nucleophile role is filled by Lys269.

It belongs to the deoxyhypusine synthase family. It depends on NAD(+) as a cofactor.

The catalysed reaction is [eIF5A protein]-L-lysine + spermidine = [eIF5A protein]-deoxyhypusine + propane-1,3-diamine. The protein operates within protein modification; eIF5A hypusination. Catalyzes the NAD-dependent oxidative cleavage of spermidine and the subsequent transfer of the butylamine moiety of spermidine to the epsilon-amino group of a specific lysine residue of the eIF-5A precursor protein to form the intermediate deoxyhypusine residue. The sequence is that of Probable deoxyhypusine synthase 1 (dys1) from Archaeoglobus fulgidus (strain ATCC 49558 / DSM 4304 / JCM 9628 / NBRC 100126 / VC-16).